We begin with the raw amino-acid sequence, 122 residues long: Acidic phospholipase A2 (122 aa).

7 cysteine pairs are disulfide-bonded: Cys-26-Cys-115, Cys-28-Cys-44, Cys-43-Cys-95, Cys-49-Cys-122, Cys-50-Cys-88, Cys-57-Cys-81, and Cys-75-Cys-86. 3 residues coordinate Ca(2+): Tyr-27, Gly-29, and Gly-31. The active site involves His-47. Asp-48 serves as a coordination point for Ca(2+). Residue Asp-89 is part of the active site.

It belongs to the phospholipase A2 family. Group II subfamily. D49 sub-subfamily. It depends on Ca(2+) as a cofactor. Contains 7 disulfide bonds. In terms of tissue distribution, expressed by the venom gland.

Its subcellular location is the secreted. The catalysed reaction is a 1,2-diacyl-sn-glycero-3-phosphocholine + H2O = a 1-acyl-sn-glycero-3-phosphocholine + a fatty acid + H(+). Functionally, snake venom phospholipase A2 (PLA2) that displays low systemic toxicity and causes severe symptoms only at very high concentrations (15 mg/kg). Has neither coagulant nor anticoagulant activity. PLA2 catalyzes the calcium-dependent hydrolysis of the 2-acyl groups in 3-sn-phosphoglycerides. This Bothrops ammodytoides (Yararanata) protein is Acidic phospholipase A2.